A 269-amino-acid chain; its full sequence is MSAGQRPAPKFPLRLDQVKPAGRSGAAPLLRPQRPLHQAATERGRGTTPAGLGLDSHLVRERMLARLQAEGVRDARVLAAMRAVPRHSFVDTALANQAYEDTSLPIGLGQTISKPSVVARMIELMLALQPAGARPRLLEIGSGCGYQAAVLAQLARQVVSIERLRPLYDKARENLAPLNFGNLRLVYGDGRIGHAPNAPYDGIIAAAGGEDIPQPWIDQLGPGGRLVAPMLDARSGGQVLVVIDRHADGNLVRSLHEAVRFVPLKSGTD.

Residues 1–53 (MSAGQRPAPKFPLRLDQVKPAGRSGAAPLLRPQRPLHQAATERGRGTTPAGLG) form a disordered region. The active site involves Ser-113.

It belongs to the methyltransferase superfamily. L-isoaspartyl/D-aspartyl protein methyltransferase family.

The protein resides in the cytoplasm. It carries out the reaction [protein]-L-isoaspartate + S-adenosyl-L-methionine = [protein]-L-isoaspartate alpha-methyl ester + S-adenosyl-L-homocysteine. Catalyzes the methyl esterification of L-isoaspartyl residues in peptides and proteins that result from spontaneous decomposition of normal L-aspartyl and L-asparaginyl residues. It plays a role in the repair and/or degradation of damaged proteins. This Methylibium petroleiphilum (strain ATCC BAA-1232 / LMG 22953 / PM1) protein is Protein-L-isoaspartate O-methyltransferase.